Reading from the N-terminus, the 1165-residue chain is DNA-directed RNA polymerase subunit beta' (1165 aa).

Zn(2+) contacts are provided by cysteine 60, cysteine 62, cysteine 75, and cysteine 78. Residues aspartate 449, aspartate 451, and aspartate 453 each coordinate Mg(2+). Cysteine 794, cysteine 868, cysteine 875, and cysteine 878 together coordinate Zn(2+).

It belongs to the RNA polymerase beta' chain family. The RNAP catalytic core consists of 2 alpha, 1 beta, 1 beta' and 1 omega subunit. When a sigma factor is associated with the core the holoenzyme is formed, which can initiate transcription. The cofactor is Mg(2+). It depends on Zn(2+) as a cofactor.

The enzyme catalyses RNA(n) + a ribonucleoside 5'-triphosphate = RNA(n+1) + diphosphate. Its function is as follows. DNA-dependent RNA polymerase catalyzes the transcription of DNA into RNA using the four ribonucleoside triphosphates as substrates. This is DNA-directed RNA polymerase subunit beta' from Acetivibrio thermocellus (strain ATCC 27405 / DSM 1237 / JCM 9322 / NBRC 103400 / NCIMB 10682 / NRRL B-4536 / VPI 7372) (Clostridium thermocellum).